The sequence spans 189 residues: Elongation factor P (189 aa).

It belongs to the elongation factor P family.

It is found in the cytoplasm. It functions in the pathway protein biosynthesis; polypeptide chain elongation. Involved in peptide bond synthesis. Stimulates efficient translation and peptide-bond synthesis on native or reconstituted 70S ribosomes in vitro. Probably functions indirectly by altering the affinity of the ribosome for aminoacyl-tRNA, thus increasing their reactivity as acceptors for peptidyl transferase. In Ehrlichia ruminantium (strain Gardel), this protein is Elongation factor P.